A 273-amino-acid polypeptide reads, in one-letter code: MTKLVIHLVSDSSVQTAKYAANSAIAQFTSVKPKLYHWPMIRNLELLNEVLSKIEYKRGIVLYTIADQELRKALTKFCYELKIPCISVIGKIIKEMSVFSGIEIEKEQNYNYKFDKTYFDTLNAIDYAIRHDDGQMLNELSEADIILIGPSRTSKTPTSVFLAYNGLKAANIPYVYNCPFPDFIEKDIDQLVVGLVINPNRLIEIREARLNLLQINENKSYTDFNIVQKECLEVRKICDQRNWPVIDVSTRSIEETAALIMRIYYNKKNKYNK.

149 to 156 is an ADP binding site; it reads GPSRTSKT.

This sequence belongs to the pyruvate, phosphate/water dikinase regulatory protein family. PDRP subfamily.

The catalysed reaction is N(tele)-phospho-L-histidyl/L-threonyl-[pyruvate, phosphate dikinase] + ADP = N(tele)-phospho-L-histidyl/O-phospho-L-threonyl-[pyruvate, phosphate dikinase] + AMP + H(+). It carries out the reaction N(tele)-phospho-L-histidyl/O-phospho-L-threonyl-[pyruvate, phosphate dikinase] + phosphate + H(+) = N(tele)-phospho-L-histidyl/L-threonyl-[pyruvate, phosphate dikinase] + diphosphate. Its function is as follows. Bifunctional serine/threonine kinase and phosphorylase involved in the regulation of the pyruvate, phosphate dikinase (PPDK) by catalyzing its phosphorylation/dephosphorylation. The protein is Putative pyruvate, phosphate dikinase regulatory protein of Rickettsia massiliae (strain Mtu5).